We begin with the raw amino-acid sequence, 226 residues long: Ribosomal RNA large subunit methyltransferase E (226 aa).

S-adenosyl-L-methionine contacts are provided by G82, W84, D100, D116, and D140. The active-site Proton acceptor is K180.

This sequence belongs to the class I-like SAM-binding methyltransferase superfamily. RNA methyltransferase RlmE family.

The protein localises to the cytoplasm. It carries out the reaction uridine(2552) in 23S rRNA + S-adenosyl-L-methionine = 2'-O-methyluridine(2552) in 23S rRNA + S-adenosyl-L-homocysteine + H(+). In terms of biological role, specifically methylates the uridine in position 2552 of 23S rRNA at the 2'-O position of the ribose in the fully assembled 50S ribosomal subunit. The chain is Ribosomal RNA large subunit methyltransferase E from Caulobacter sp. (strain K31).